The sequence spans 931 residues: Dual O-methyltransferase/FAD-dependent monooxygenase elcB (931 aa).

The segment at 1-463 (MAASTGLSTV…TTDKARPNGD (463 aa)) is O-methyltransferase. Asp-254 lines the S-adenosyl-L-methionine pocket. His-304 (proton acceptor) is an active-site residue. Residues 455–474 (TDKARPNGDTTHSGQASIPN) are disordered. Residues 462-474 (GDTTHSGQASIPN) show a composition bias toward polar residues. Positions 464–931 (TTHSGQASIP…TFEELDVAEL (468 aa)) are FAD-dependent monooxygenase. Residues Glu-520, Arg-604, Asp-836, and Ala-849 each coordinate FAD.

In the C-terminal section; belongs to the paxM FAD-dependent monooxygenase family. This sequence in the N-terminal section; belongs to the class I-like SAM-binding methyltransferase superfamily. Cation-independent O-methyltransferase family. COMT subfamily.

It catalyses the reaction nor-toralactone + S-adenosyl-L-methionine = toralactone + S-adenosyl-L-homocysteine + H(+). The catalysed reaction is toralactone + NADH + O2 + H(+) = 1-(3,4,5-trihydroxy-7-methoxynaphthalen-2-yl)propan-2-one + CO2 + NAD(+). The protein operates within secondary metabolite biosynthesis. In terms of biological role, dual O-methyltransferase/FAD-dependent monooxygenase; part of the gene cluster that mediates the biosynthesis of elsinochrome C, a perelyenequinone phytotoxin structurally similar to cercosporin. The first step of elsinochrome C biosynthesis is performed by the polyketide synthase elcA which catalyzes the formation of nor-toralactone. The starter unit acyltransferase (SAT) domain of elcA initiates polyketide extension by the selective utilization of acetyl-CoA, which is elongated to the heptaketide in the beta-ketoacyl synthase (KS) domain by successive condensations with six malonyl units introduced by the malonyl acyltransferase (MAT) domain. The product template (PT) domain catalyzes C4-C9 and C2-C11 aldol cyclizations and dehydrations to a trihydroxynaphthalene, which is thought to be delivered to the thioesterase (TE) domain for product release. The bifunctional enzyme elcB then methylates nor-toralactone to toralactone before conducting an unusual oxidative aromatic ring opening. The next step in perylenequinone biosynthesis is an O-methylation at the nascent OH-6 of the elcB product performed by the O-methyltransferase elcD. The oxidative coupling of the two monomeric naphthol units in perylenequinone biosynthesis is catalyzed by the FAD-dependent monooxygenase elcE and the multicopper oxidase elcG. ElcG might catalyze the first intermolecular coupling in a regio- and stereo-selective manner via a phenol radical coupling mechanism and the elcE could forge the second C-C bond intramolecularly via a hydride transfer mechanism. The fasciclin domain-containing protein elcF might also play a role duting this step. The last piece of the puzzle in the biosynthesis of elsinochrome C is the additional annulation by enolate coupling to afford the dihydrobenzo(ghi)perylenequinone system, catalyzed by the FAD-dependent monooxygenase elcH. The sequence is that of Dual O-methyltransferase/FAD-dependent monooxygenase elcB from Phaeosphaeria nodorum (strain SN15 / ATCC MYA-4574 / FGSC 10173) (Glume blotch fungus).